A 275-amino-acid chain; its full sequence is Elongation factor Ts (275 aa).

The tract at residues 76-79 (TDFV) is involved in Mg(2+) ion dislocation from EF-Tu.

The protein belongs to the EF-Ts family.

The protein resides in the cytoplasm. Associates with the EF-Tu.GDP complex and induces the exchange of GDP to GTP. It remains bound to the aminoacyl-tRNA.EF-Tu.GTP complex up to the GTP hydrolysis stage on the ribosome. The chain is Elongation factor Ts from Corynebacterium glutamicum (strain ATCC 13032 / DSM 20300 / JCM 1318 / BCRC 11384 / CCUG 27702 / LMG 3730 / NBRC 12168 / NCIMB 10025 / NRRL B-2784 / 534).